Consider the following 601-residue polypeptide: MCGIVGYIGYDNAKELLLKGLEKLEYRGYDSAGIAVVNDDNTTVFKEKGRIAELRKVADSSDFDGPVGIGHTRWATHGVPNHENSHPHQSSNGRFTLVHNGVIENYEELKGEYLQGVSFISETDTEVIVQLVEYFSNQGLSTEEAFTKVVSLLHGSYALGLLDAEDKDTIYVAKNKSPLLLGVGEGFNVIASDALAMLQVTSEYKEIHDHEIVIVKKDEVIIKDADGNVVERDSYIAEIDASDAEKGVYAHYMLKEIHEQPAVMRRIIQEYQDAEGNLKIDQDIINDVKEADRIYVIAAGTSYHAGLVGKEFLEKWAGVPTEVHVASEFVYNMPLLSEKPLFVYISQSGETADSRAVLVETNKLGHKSLTITNVAGSTLSREADHTLLLHAGPEIAVASTKAYTAQIAVLSILSQIVAKEHGREADIDLLRELAKVTTAIEAIVDDAPIMEQIATDFLETTRNAFFIGRTIDYNVSLEGALKLKEISYIQAEGFAGGELKHGTIALIEDGTPVVALATQENVNLSIRGNVKEVVARGAHPCIISMEGLEKEGDTYVIPHVHELLTPLVSVVALQLISYYAALHRDLDVDKPRNLAKSVTVE.

Catalysis depends on cysteine 2, which acts as the Nucleophile; for GATase activity. The region spanning 2–218 (CGIVGYIGYD…DHEIVIVKKD (217 aa)) is the Glutamine amidotransferase type-2 domain. 2 SIS domains span residues 284–423 (IIND…EHGR) and 453–591 (IATD…VDKP). Lysine 596 acts as the For Fru-6P isomerization activity in catalysis.

As to quaternary structure, homodimer.

It localises to the cytoplasm. The enzyme catalyses D-fructose 6-phosphate + L-glutamine = D-glucosamine 6-phosphate + L-glutamate. Catalyzes the first step in hexosamine metabolism, converting fructose-6P into glucosamine-6P using glutamine as a nitrogen source. This chain is Glutamine--fructose-6-phosphate aminotransferase [isomerizing], found in Staphylococcus aureus (strain Mu50 / ATCC 700699).